The following is a 352-amino-acid chain: N-terminal EF-hand calcium-binding protein 1 (352 aa).

Phosphoserine is present on serine 4. 2 EF-hand domains span residues 26–61 (KGMS…GVLS) and 60–95 (LSGE…HLGE). 5 residues coordinate Ca(2+): aspartate 39, asparagine 41, aspartate 43, lysine 45, and glutamate 50. A coiled-coil region spans residues 135 to 163 (LLKETLNQLQSLQNSLECAMETTEEQTRQ). Positions 155–202 (ETTEEQTRQERQGPSKPEVLSIQWPGKRSSRRVQRHNSFSPNSPQFNV) are disordered. The span at 190–202 (HNSFSPNSPQFNV) shows a compositional bias: polar residues. Residues serine 192 and serine 197 each carry the phosphoserine modification. The stretch at 209–275 (EEDNQWMTQI…EEFQLALKHY (67 aa)) forms a coiled coil. The ABM domain maps to 252 to 340 (MLVQRQMSVT…LETPELTSTM (89 aa)).

In terms of assembly, interacts with STX1. May interact with CPNE6. As to expression, expressed in brain (at protein level). Expressed in the cerebral cortex only in layer 4, thalamic nuclei (the mediodorsal nucleus), hippocampus (a small band of pyramidal neurons at the boundary between CA1 and CA3), interneurons interspersed throughout the hippocampus proper, interneurons in the hilus, bodies of the neurons but also their dendritic projections (at protein level).

The protein localises to the cytoplasm. In Mus musculus (Mouse), this protein is N-terminal EF-hand calcium-binding protein 1 (Necab1).